We begin with the raw amino-acid sequence, 443 residues long: SAM50-like protein CG7639 (443 aa).

In terms of domain architecture, POTRA spans 23–101; the sequence is ARVDRVNVSG…QGYEVTFKGN (79 aa).

It belongs to the SAM50/omp85 family. In terms of assembly, associates with the mitochondrial contact site and cristae organizing system (MICOS) complex (also known as MINOS or MitOS complex).

The protein localises to the mitochondrion outer membrane. Functionally, may play a role in the maintenance of the structure of mitochondrial cristae. This Drosophila melanogaster (Fruit fly) protein is SAM50-like protein CG7639.